The chain runs to 400 residues: Aspartate/prephenate aminotransferase (400 aa).

The L-aspartate site is built by Gly-39, Trp-125, and Asn-175. An N6-(pyridoxal phosphate)lysine modification is found at Lys-239. Residue Arg-375 coordinates L-aspartate.

It belongs to the class-I pyridoxal-phosphate-dependent aminotransferase family. In terms of assembly, homodimer. It depends on pyridoxal 5'-phosphate as a cofactor.

The protein localises to the cytoplasm. The catalysed reaction is L-aspartate + 2-oxoglutarate = oxaloacetate + L-glutamate. It carries out the reaction L-arogenate + 2-oxoglutarate = prephenate + L-glutamate. Its function is as follows. Catalyzes the reversible conversion of aspartate and 2-oxoglutarate to glutamate and oxaloacetate. Can also transaminate prephenate in the presence of glutamate. This Cereibacter sphaeroides (strain ATCC 17029 / ATH 2.4.9) (Rhodobacter sphaeroides) protein is Aspartate/prephenate aminotransferase.